Here is a 625-residue protein sequence, read N- to C-terminus: Chaperone protein HtpG (625 aa).

The segment at 1 to 332 (MSNKQNTAVQ…TEDLSLNVSR (332 aa)) is a; substrate-binding. The segment at 333–545 (EIVQSSPVMS…KDAMDSQMER (213 aa)) is b. The segment at 546-625 (MMKMMQQEMP…ELIEAATLSR (80 aa)) is c.

The protein belongs to the heat shock protein 90 family. Homodimer.

The protein resides in the cytoplasm. In terms of biological role, molecular chaperone. Has ATPase activity. The protein is Chaperone protein HtpG of Chlorobium luteolum (strain DSM 273 / BCRC 81028 / 2530) (Pelodictyon luteolum).